A 981-amino-acid polypeptide reads, in one-letter code: uncharacterized protein (981 aa).

Disordered stretches follow at residues 65 to 133 (NIDN…SNNS), 149 to 463 (SSNS…NKIE), 491 to 580 (SNNI…DSPL), 592 to 834 (EQTN…LNQV), and 861 to 891 (VQNDTNSSPISQQLSTSSSPFKSTGGSNDGN). Over residues 75–88 (SSDDDDDDDDDDDY) the composition is skewed to acidic residues. Low complexity-rich tracts occupy residues 89–133 (NNNN…SNNS), 149–158 (SSNSINNNDN), and 170–181 (SAKTTSSLTSSK). The segment covering 182 to 195 (RSLDSRNRNRDRSY) has biased composition (basic and acidic residues). Residues 196 to 206 (TRSRSRSRSRS) are compositionally biased toward basic residues. The span at 207–227 (YSRGFSSLSRSRSRSRSISSR) shows a compositional bias: low complexity. Residues 228–269 (SRSRSRSRRSRSRSSRSRSRSRSKSKSKSRRSRSRSRSRRSR) show a composition bias toward basic residues. Residues 270 to 292 (SRSDSRSRSDSRGRSRSRSDSRK) are compositionally biased toward basic and acidic residues. Positions 314–358 (SSKRHQNSRKRNRSYSRSRTRSWSRSRTRSRSRRRYGGRTFRSPR) are enriched in basic residues. Over residues 359 to 452 (RSRDDSRDRG…SQSPHNEKNK (94 aa)) the composition is skewed to basic and acidic residues. Residues 491–553 (SNNINNNNIK…SHNNTNGNVN (63 aa)) are compositionally biased toward low complexity. 2 stretches are compositionally biased toward polar residues: residues 554–576 (GVSKTTSSPASDNSTPENISTDL) and 605–622 (ESNNNGNDRFKTKCSSTE). Over residues 623 to 634 (NENKNRENEKNN) the composition is skewed to basic and acidic residues. 2 stretches are compositionally biased toward low complexity: residues 635–820 (SENS…NNNS) and 867–891 (SSPISQQLSTSSSPFKSTGGSNDGN).

This is an uncharacterized protein from Dictyostelium discoideum (Social amoeba).